The following is a 329-amino-acid chain: tRNA N6-adenosine threonylcarbamoyltransferase (329 aa).

His108, His112, and Tyr129 together coordinate Fe cation. Substrate-binding positions include 129 to 133 (YVSGG), Asp161, Glu182, and Ser261. Residue Asp289 participates in Fe cation binding.

This sequence belongs to the KAE1 / TsaD family. It depends on Fe(2+) as a cofactor.

Its subcellular location is the cytoplasm. The enzyme catalyses L-threonylcarbamoyladenylate + adenosine(37) in tRNA = N(6)-L-threonylcarbamoyladenosine(37) in tRNA + AMP + H(+). Its function is as follows. Required for the formation of a threonylcarbamoyl group on adenosine at position 37 (t(6)A37) in tRNAs that read codons beginning with adenine. Is probably involved in the transfer of the threonylcarbamoyl moiety of threonylcarbamoyl-AMP (TC-AMP) to the N6 group of A37. This is tRNA N6-adenosine threonylcarbamoyltransferase from Ignicoccus hospitalis (strain KIN4/I / DSM 18386 / JCM 14125).